The following is a 104-amino-acid chain: Gastrin (104 aa).

Residues 1 to 21 form the signal peptide; sequence MQRLCAYVLIHVLALAACSEA. The propeptide occupies 22 to 58; that stretch reads SWKPGFQLQDASSGPGANRGKEPHELDRLGPASHHRR. Residues 27–67 form a disordered region; that stretch reads FQLQDASSGPGANRGKEPHELDRLGPASHHRRQLGLQGPPH. The segment covering 40–49 has biased composition (basic and acidic residues); it reads RGKEPHELDR. The residue at position 59 (Gln59) is a Pyrrolidone carboxylic acid; in form big gastrin. Gln76 is modified (pyrrolidone carboxylic acid; in form gastrin). The residue at position 87 (Tyr87) is a Sulfotyrosine; partial. Phe92 is modified (phenylalanine amide). The residue at position 96 (Ser96) is a Phosphoserine. The propeptide occupies 96-104; that stretch reads SAEEGDQRP.

This sequence belongs to the gastrin/cholecystokinin family. In terms of processing, sulfation enhances proteolytic processing, and blocks peptide degradation. Levels of sulfation differ between proteolytically-cleaved gastrins. Thus, gastrin-6 is almost 73% sulfated, whereas the larger gastrins are less than 50% sulfated. Sulfation levels are also tissue-specific.

The protein localises to the secreted. Its function is as follows. Gastrin stimulates the stomach mucosa to produce and secrete hydrochloric acid and the pancreas to secrete its digestive enzymes. It also stimulates smooth muscle contraction and increases blood circulation and water secretion in the stomach and intestine. The chain is Gastrin (GAST) from Sus scrofa (Pig).